The chain runs to 715 residues: Fatty acid oxidation complex subunit alpha (715 aa).

Residues 1–190 (MDMTSAFTLN…RVGLVDEVVP (190 aa)) form an enoyl-CoA hydratase region. Positions 306-715 (GPLASVGVLG…WNSGETDLKE (410 aa)) are 3-hydroxyacyl-CoA dehydrogenase.

It in the N-terminal section; belongs to the enoyl-CoA hydratase/isomerase family. The protein in the central section; belongs to the 3-hydroxyacyl-CoA dehydrogenase family. Heterotetramer of two alpha chains (FadJ) and two beta chains (FadI).

The protein localises to the cytoplasm. It catalyses the reaction a (3S)-3-hydroxyacyl-CoA = a (2E)-enoyl-CoA + H2O. It carries out the reaction a 4-saturated-(3S)-3-hydroxyacyl-CoA = a (3E)-enoyl-CoA + H2O. The enzyme catalyses a (3S)-3-hydroxyacyl-CoA + NAD(+) = a 3-oxoacyl-CoA + NADH + H(+). The catalysed reaction is (3S)-3-hydroxybutanoyl-CoA = (3R)-3-hydroxybutanoyl-CoA. It functions in the pathway lipid metabolism; fatty acid beta-oxidation. Its function is as follows. Catalyzes the formation of a hydroxyacyl-CoA by addition of water on enoyl-CoA. Also exhibits 3-hydroxyacyl-CoA epimerase and 3-hydroxyacyl-CoA dehydrogenase activities. The polypeptide is Fatty acid oxidation complex subunit alpha (Citrobacter koseri (strain ATCC BAA-895 / CDC 4225-83 / SGSC4696)).